We begin with the raw amino-acid sequence, 544 residues long: Chaperonin GroEL 3 (544 aa).

Residues 30-33 (TLGP), Lys51, 87-91 (DGTTT), Gly415, and Asp496 contribute to the ATP site.

This sequence belongs to the chaperonin (HSP60) family. In terms of assembly, forms a cylinder of 14 subunits composed of two heptameric rings stacked back-to-back. Interacts with the co-chaperonin GroES.

The protein localises to the cytoplasm. It carries out the reaction ATP + H2O + a folded polypeptide = ADP + phosphate + an unfolded polypeptide.. Its function is as follows. Together with its co-chaperonin GroES, plays an essential role in assisting protein folding. The GroEL-GroES system forms a nano-cage that allows encapsulation of the non-native substrate proteins and provides a physical environment optimized to promote and accelerate protein folding. The polypeptide is Chaperonin GroEL 3 (Rhizobium meliloti (strain 1021) (Ensifer meliloti)).